The following is a 106-amino-acid chain: MASSGAGDPLDSKRGEAPFAQRIDPTREKLTPEQLHSMRQAELAQWQKVLPRRRTRNIVTGLGIGALVLAIYGYTFYSISQERFLDELEDEAKAARARALARASGS.

The disordered stretch occupies residues 1-34; it reads MASSGAGDPLDSKRGEAPFAQRIDPTREKLTPEQ. Alanine 2 is modified (N-acetylalanine). Topologically, residues 2 to 57 are mitochondrial matrix; the sequence is ASSGAGDPLDSKRGEAPFAQRIDPTREKLTPEQLHSMRQAELAQWQKVLPRRRTRN. Residues 58 to 78 form a helical membrane-spanning segment; it reads IVTGLGIGALVLAIYGYTFYS. The stretch at 78–104 forms a coiled coil; that stretch reads SISQERFLDELEDEAKAARARALARAS. At 79–106 the chain is on the mitochondrial intermembrane side; the sequence is ISQERFLDELEDEAKAARARALARASGS.

This sequence belongs to the COA3 family. In terms of assembly, along with COX14, core component of the MITRAC (mitochondrial translation regulation assembly intermediate of cytochrome c oxidase complex) complex. Interacts with MT-CO1/COX1, SMIM20, SURF1 and TIMM21.

It is found in the mitochondrion inner membrane. Functionally, core component of the MITRAC (mitochondrial translation regulation assembly intermediate of cytochrome c oxidase complex) complex, that regulates cytochrome c oxidase assembly. MITRAC complexes regulate both translation of mitochondrial encoded components and assembly of nuclear-encoded components imported in mitochondrion. Required for efficient translation of MT-CO1 and mitochondrial respiratory chain complex IV assembly. The sequence is that of Cytochrome c oxidase assembly factor 3 homolog, mitochondrial (COA3) from Homo sapiens (Human).